The chain runs to 291 residues: Small ribosomal subunit biogenesis GTPase RsgA (291 aa).

Residues 63-221 (KNELKRPPVS…IADTPGFSAL (159 aa)) form the CP-type G domain. GTP-binding positions include 112–115 (TKKD) and 164–172 (GQSGVGKST). Zn(2+) is bound by residues C245, C250, H252, and C258.

The protein belongs to the TRAFAC class YlqF/YawG GTPase family. RsgA subfamily. Monomer. Associates with 30S ribosomal subunit, binds 16S rRNA. Requires Zn(2+) as cofactor.

It is found in the cytoplasm. In terms of biological role, one of several proteins that assist in the late maturation steps of the functional core of the 30S ribosomal subunit. Helps release RbfA from mature subunits. May play a role in the assembly of ribosomal proteins into the subunit. Circularly permuted GTPase that catalyzes slow GTP hydrolysis, GTPase activity is stimulated by the 30S ribosomal subunit. This chain is Small ribosomal subunit biogenesis GTPase RsgA, found in Staphylococcus aureus (strain Mu50 / ATCC 700699).